We begin with the raw amino-acid sequence, 434 residues long: Glutamyl-tRNA reductase (434 aa).

Substrate-binding positions include 52-55 (TCNR), serine 115, 120-122 (ETQ), and glutamine 126. The Nucleophile role is filled by cysteine 53. 195-200 (GAGEMI) is an NADP(+) binding site.

Belongs to the glutamyl-tRNA reductase family. Homodimer.

The catalysed reaction is (S)-4-amino-5-oxopentanoate + tRNA(Glu) + NADP(+) = L-glutamyl-tRNA(Glu) + NADPH + H(+). The protein operates within porphyrin-containing compound metabolism; protoporphyrin-IX biosynthesis; 5-aminolevulinate from L-glutamyl-tRNA(Glu): step 1/2. In terms of biological role, catalyzes the NADPH-dependent reduction of glutamyl-tRNA(Glu) to glutamate 1-semialdehyde (GSA). In Cupriavidus metallidurans (strain ATCC 43123 / DSM 2839 / NBRC 102507 / CH34) (Ralstonia metallidurans), this protein is Glutamyl-tRNA reductase.